Consider the following 474-residue polypeptide: Citrate synthase, mitochondrial (474 aa).

Residues 1–35 (MASTLRLSTSALRSSTLAGKPVVQSVAFNGLRCYS) constitute a mitochondrion transit peptide. Catalysis depends on residues histidine 310, histidine 356, and aspartate 411.

This sequence belongs to the citrate synthase family.

It is found in the mitochondrion matrix. It carries out the reaction oxaloacetate + acetyl-CoA + H2O = citrate + CoA + H(+). It participates in carbohydrate metabolism; tricarboxylic acid cycle; isocitrate from oxaloacetate: step 1/2. The sequence is that of Citrate synthase, mitochondrial (citA) from Emericella nidulans (strain FGSC A4 / ATCC 38163 / CBS 112.46 / NRRL 194 / M139) (Aspergillus nidulans).